The chain runs to 206 residues: Protein-methionine-sulfoxide reductase heme-binding subunit MsrQ (206 aa).

6 helical membrane passes run 7–27 (IIIH…LLSG), 43–63 (FLGF…KVFY), 77–97 (LGLW…ALEL), 112–132 (GYLI…LSSW), 142–162 (WWFY…IHYV), and 172–192 (SMLY…GLFI).

Belongs to the MsrQ family. In terms of assembly, heterodimer of a catalytic subunit (MsrP) and a heme-binding subunit (MsrQ). The cofactor is FMN. Heme b is required as a cofactor.

It localises to the cell inner membrane. Functionally, part of the MsrPQ system that repairs oxidized periplasmic proteins containing methionine sulfoxide residues (Met-O), using respiratory chain electrons. Thus protects these proteins from oxidative-stress damage caused by reactive species of oxygen and chlorine generated by the host defense mechanisms. MsrPQ is essential for the maintenance of envelope integrity under bleach stress, rescuing a wide series of structurally unrelated periplasmic proteins from methionine oxidation. MsrQ provides electrons for reduction to the reductase catalytic subunit MsrP, using the quinone pool of the respiratory chain. The polypeptide is Protein-methionine-sulfoxide reductase heme-binding subunit MsrQ (Pasteurella multocida (strain Pm70)).